Reading from the N-terminus, the 304-residue chain is Uricase (304 aa).

Position 2 is an N-acetylalanine (A2). Residues K10 and K23 each carry the N6-acetyllysine; alternate modification. N6-succinyllysine; alternate occurs at positions 10 and 23. K23 (charge relay system) is an active-site residue. Residues K27 and K36 each carry the N6-acetyllysine modification. 2 positions are modified to phosphoserine: S39 and S63. T68 (charge relay system) is an active-site residue. Positions 68 and 69 each coordinate urate. Residues K118, K122, and K164 each carry the N6-acetyllysine modification. Residue F170 participates in urate binding. An N6-acetyllysine mark is found at K175 and K185. R187 is a binding site for urate. K221 and K228 each carry N6-acetyllysine; alternate. Residues K221 and K228 each carry the N6-succinyllysine; alternate modification. S232 is subject to Phosphoserine. Residues V235, Q236, and N262 each coordinate urate. H264 (charge relay system) is an active-site residue. The residue at position 278 (K278) is an N6-acetyllysine. At Y289 the chain carries Phosphotyrosine. The Microbody targeting signal motif lies at 302–304 (SRL).

This sequence belongs to the uricase family. Homotetramer.

It localises to the peroxisome. The enzyme catalyses urate + O2 + H2O = 5-hydroxyisourate + H2O2. It participates in purine metabolism; urate degradation; (S)-allantoin from urate: step 1/3. Functionally, catalyzes the oxidation of uric acid to 5-hydroxyisourate, which is further processed to form (S)-allantoin. This chain is Uricase (UOX), found in Sus scrofa (Pig).